We begin with the raw amino-acid sequence, 192 residues long: Imidazoleglycerol-phosphate dehydratase (192 aa).

The protein belongs to the imidazoleglycerol-phosphate dehydratase family.

It is found in the cytoplasm. It carries out the reaction D-erythro-1-(imidazol-4-yl)glycerol 3-phosphate = 3-(imidazol-4-yl)-2-oxopropyl phosphate + H2O. Its pathway is amino-acid biosynthesis; L-histidine biosynthesis; L-histidine from 5-phospho-alpha-D-ribose 1-diphosphate: step 6/9. In Staphylococcus epidermidis (strain ATCC 12228 / FDA PCI 1200), this protein is Imidazoleglycerol-phosphate dehydratase.